Reading from the N-terminus, the 507-residue chain is Protein MosB (507 aa).

A DNA-binding region (H-T-H motif) is located at residues 256–275 (QAHGALYKGQHVGLLSDIGC). Lysine 282 is modified (N6-(pyridoxal phosphate)lysine).

It belongs to the DegT/DnrJ/EryC1 family.

Its function is as follows. Involved in the biosynthesis of the rhizopine 3-O-methyl-scyllo-inosamine. May have a regulatory role in controlling the housekeeping genes within the nodule which are involved in the biosynthesis of the rhizopine backbone. The sequence is that of Protein MosB (mosB) from Rhizobium meliloti (Ensifer meliloti).